The sequence spans 70 residues: UPF0150 protein TM_1311 (70 aa).

It belongs to the UPF0150 family.

The protein is UPF0150 protein TM_1311 of Thermotoga maritima (strain ATCC 43589 / DSM 3109 / JCM 10099 / NBRC 100826 / MSB8).